Here is a 245-residue protein sequence, read N- to C-terminus: Suppressor of aph-1 (245 aa).

Residues 12 to 60 (DTKWHYLGPDSEKYGPYMSKDMLFWLQAGYFNDGLQLKTENEPNYHTLG) enclose the GYF domain. The disordered stretch occupies residues 126–166 (NQNGPPMGAQMHSQPPSEPIDAGSLSHTPDSENETRLNEQT).

Involved in negative regulation of early and late embryonic Notch signaling. The protein is Suppressor of aph-1 of Caenorhabditis elegans.